A 473-amino-acid polypeptide reads, in one-letter code: Bifunctional protein HldE (473 aa).

The tract at residues 1-318 is ribokinase; it reads MKLSMPRFDQ…RAIQREEGSE (318 aa). ATP is bound at residue 194–197; that stretch reads NLSE. The active site involves D263. The cytidylyltransferase stretch occupies residues 343-473; that stretch reads FTNGCFDILH…TAIVEKIRKN (131 aa).

In the N-terminal section; belongs to the carbohydrate kinase PfkB family. This sequence in the C-terminal section; belongs to the cytidylyltransferase family. In terms of assembly, homodimer.

It catalyses the reaction D-glycero-beta-D-manno-heptose 7-phosphate + ATP = D-glycero-beta-D-manno-heptose 1,7-bisphosphate + ADP + H(+). It carries out the reaction D-glycero-beta-D-manno-heptose 1-phosphate + ATP + H(+) = ADP-D-glycero-beta-D-manno-heptose + diphosphate. It functions in the pathway nucleotide-sugar biosynthesis; ADP-L-glycero-beta-D-manno-heptose biosynthesis; ADP-L-glycero-beta-D-manno-heptose from D-glycero-beta-D-manno-heptose 7-phosphate: step 1/4. The protein operates within nucleotide-sugar biosynthesis; ADP-L-glycero-beta-D-manno-heptose biosynthesis; ADP-L-glycero-beta-D-manno-heptose from D-glycero-beta-D-manno-heptose 7-phosphate: step 3/4. Catalyzes the phosphorylation of D-glycero-D-manno-heptose 7-phosphate at the C-1 position to selectively form D-glycero-beta-D-manno-heptose-1,7-bisphosphate. In terms of biological role, catalyzes the ADP transfer from ATP to D-glycero-beta-D-manno-heptose 1-phosphate, yielding ADP-D-glycero-beta-D-manno-heptose. This chain is Bifunctional protein HldE, found in Pseudomonas putida (strain ATCC 47054 / DSM 6125 / CFBP 8728 / NCIMB 11950 / KT2440).